A 129-amino-acid polypeptide reads, in one-letter code: Small ribosomal subunit protein uS9 (129 aa).

The protein belongs to the universal ribosomal protein uS9 family.

In Chlorobium limicola (strain DSM 245 / NBRC 103803 / 6330), this protein is Small ribosomal subunit protein uS9.